The following is a 338-amino-acid chain: Phenylalanine--tRNA ligase alpha subunit (338 aa).

E252 contributes to the Mg(2+) binding site.

The protein belongs to the class-II aminoacyl-tRNA synthetase family. Phe-tRNA synthetase alpha subunit type 1 subfamily. Tetramer of two alpha and two beta subunits. The cofactor is Mg(2+).

The protein localises to the cytoplasm. The catalysed reaction is tRNA(Phe) + L-phenylalanine + ATP = L-phenylalanyl-tRNA(Phe) + AMP + diphosphate + H(+). In Pseudomonas fluorescens (strain ATCC BAA-477 / NRRL B-23932 / Pf-5), this protein is Phenylalanine--tRNA ligase alpha subunit.